Consider the following 756-residue polypeptide: 1-phosphatidylinositol 4,5-bisphosphate phosphodiesterase delta-1 (756 aa).

Positions 21–130 (ALLKGSQLLK…WVQGLRKIIH (110 aa)) constitute a PH domain. The interval 30 to 57 (KVKSSSWRRERFYKLQEDCKTIWQESRK) is substrate binding. EF-hand domains lie at 140–175 (KLQH…LNIQ) and 176–211 (VDDG…LTQR). 10 residues coordinate Ca(2+): Asp153, Asn155, Asp157, Lys159, Glu164, Asp189, Ser191, Thr193, Ser195, and Glu200. An O-linked (GlcNAc) serine glycan is attached at Ser191. Residue Thr193 is glycosylated (O-linked (GlcNAc) threonine). Residues 296-440 (QDMDQPLSHY…LKGKILLKGK (145 aa)) enclose the PI-PLC X-box domain. His311 is a catalytic residue. Residues Asn312, Glu341, and Asp343 each coordinate Ca(2+). Residue His356 is part of the active site. Residue Glu390 participates in Ca(2+) binding. Substrate-binding residues include Lys438 and Lys440. Thr457 carries the phosphothreonine modification. Ser460 is subject to Phosphoserine. A PI-PLC Y-box domain is found at 492–609 (LSDMIIYCKS…GYVLKPAFLR (118 aa)). 2 residues coordinate substrate: Ser522 and Arg549. The region spanning 609–737 (RDPNTTFNSR…QGYRHVHLLS (129 aa)) is the C2 domain. Residues Ile651, Asp653, Asn677, Asp706, Tyr707, and Asp708 each coordinate Ca(2+).

Interacts with TGM2. Ca(2+) serves as cofactor.

The catalysed reaction is a 1,2-diacyl-sn-glycero-3-phospho-(1D-myo-inositol-4,5-bisphosphate) + H2O = 1D-myo-inositol 1,4,5-trisphosphate + a 1,2-diacyl-sn-glycerol + H(+). It carries out the reaction a 1,2-diacyl-sn-glycero-3-phospho-(1D-myo-inositol) + H2O = 1D-myo-inositol 1-phosphate + a 1,2-diacyl-sn-glycerol + H(+). The production of the second messenger molecules diacylglycerol (DAG) and inositol 1,4,5-trisphosphate (IP3) is mediated by activated phosphatidylinositol-specific phospholipase C enzymes. Essential for trophoblast and placental development. Binds phosphatidylinositol 4,5-bisphosphate. This Rattus norvegicus (Rat) protein is 1-phosphatidylinositol 4,5-bisphosphate phosphodiesterase delta-1.